Reading from the N-terminus, the 119-residue chain is RKLAFRYRRVKELYTTYKNNVGGLLGPAKRDAWLQLRAEVEALTDSWLTHALKSLSIISSRSNCVNVLVTTTQLIPALAKVLLYSLGAVFPIENIYSATKIGKESCFERIVSRFGTNIT.

The protein belongs to the HAD-like hydrolase superfamily. EYA family. Mg(2+) is required as a cofactor.

Its subcellular location is the cytoplasm. It is found in the nucleus. The enzyme catalyses O-phospho-L-tyrosyl-[protein] + H2O = L-tyrosyl-[protein] + phosphate. In terms of biological role, tyrosine phosphatase that specifically dephosphorylates 'Tyr-142' of histone H2AX (H2AXY142ph). 'Tyr-142' phosphorylation of histone H2AX plays a central role in DNA repair and acts as a mark that distinguishes between apoptotic and repair responses to genotoxic stress. Promotes efficient DNA repair by dephosphorylating H2AX, promoting the recruitment of DNA repair complexes containing MDC1. Its function as histone phosphatase probably explains its role in transcription regulation during organogenesis. May be involved in development of the eye. This is Protein phosphatase EYA4 (eya4) from Takifugu rubripes (Japanese pufferfish).